A 957-amino-acid chain; its full sequence is Outer kinetochore KNL1 complex subunit knl-1 (957 aa).

The stretch at M87 to T90 is repeat 1. The 8 X 4 AA repeats of M-[D/E]-[I/L/M]-[S/T] stretch occupies residues M87–T393. Positions I89 to M111 are disordered. Residues G91–N106 are compositionally biased toward polar residues. 7 tandem repeats follow at residues M109 to S112, M206 to T209, M251 to T254, M282 to T285, M326 to T329, M367 to T370, and M390 to T393. Residues S476–S504 form a disordered region. A coiled-coil region spans residues K830–R950.

In terms of assembly, component of the KNL1 complex composed of knl-1 and kbp-5. Part of the ten-subunit outer kinetochore KMN network that includes the KNL1, MIS12 and NDC80 complexes. Interacts with the protein phosphatase 1 (PP1) catalytic subunit gsp-1; the interaction is direct. Interacts with the protein phosphatase 1 (PP1) catalytic subunit gsp-2; the interaction is direct. Interacts with the MIS12 complex subunits kbp-1, kbp-2 and mis-12. Interacts with the NDC80 complex components ndc-80 and him-10. Interacts with knl-3. Interacts with kbp-3. Interacts with kbp-4. Interacts with kbp-5.

The protein resides in the cytoplasm. It localises to the cell cortex. The protein localises to the chromosome. It is found in the centromere. Its subcellular location is the kinetochore. In terms of biological role, acts as a component of the outer kinetochore KNL1 complex that serves as a docking point for spindle assembly checkpoint components and mediates microtubule-kinetochore interactions. Kinetochores, consisting of a centromere-associated inner segment and a microtubule-contacting outer segment, play a crucial role in chromosome segregation by mediating the physical connection between centromeric DNA and spindle microtubules. The outer kinetochore is made up of the ten-subunit KMN network, comprising the MIS12, NDC80 and KNL1 complexes, and auxiliary microtubule-associated components; together they connect the outer kinetochore with the inner kinetochore, bind microtubules, and mediate interactions with mitotic checkpoint proteins that delay anaphase until chromosomes are bioriented on the spindle. Binds the protein phosphatase 1 catalytic subunits gsp-1 and gsp-2, which has a role in delaying formation of load-bearing kinetochore-microtubule attachments. Required for the recruitment of spindle-assembly checkpoint components bub-1 and mdf-1/2 to unattached kinetochores. Binds microtubules which plays a role in silencing of the spindle assembly checkpoint, but not the formation of load-bearing microtubule-kinetochore attachments. Has a role in the correct localization of the spindly-like protein spdl-1 and the RZZ complex that is composed of rod-1, czw-1 and zwl-1 to kinetochores. The sequence is that of Outer kinetochore KNL1 complex subunit knl-1 from Caenorhabditis briggsae.